The sequence spans 647 residues: Meiotically up-regulated protein C8C9.04 (647 aa).

2 disordered regions span residues M1–P241 and R387–H647. The span at K29–T46 shows a compositional bias: polar residues. Residues N49–Q67 are compositionally biased toward basic residues. Residues T92–I103 are compositionally biased toward polar residues. Residues P134 to T145 are compositionally biased toward low complexity. A compositionally biased stretch (polar residues) spans E146 to P155. The segment covering A156–A177 has biased composition (low complexity). Residues S162 and S165 each carry the phosphoserine modification. A Phosphothreonine modification is found at T168. A compositionally biased stretch (polar residues) spans Q193–S215. S197 and S200 each carry phosphoserine. Basic and acidic residues predominate over residues A232–P241. 3 stretches are compositionally biased toward polar residues: residues Q390–V406, V413–E432, and P488–S508. S396 carries the phosphoserine modification. S489 and S490 each carry phosphoserine. Phosphothreonine is present on T491. Phosphoserine occurs at positions 515, 519, and 523. Residues A518–A530 are compositionally biased toward low complexity. Polar residues predominate over residues G561–S589. The segment covering A596–N613 has biased composition (low complexity). Over residues S633–H647 the composition is skewed to basic residues.

Functionally, has a role in meiosis and sporulation. The polypeptide is Meiotically up-regulated protein C8C9.04 (Schizosaccharomyces pombe (strain 972 / ATCC 24843) (Fission yeast)).